Here is a 200-residue protein sequence, read N- to C-terminus: Transcriptional repressor NrdR (200 aa).

The segment at 3-34 is a zinc-finger region; sequence CPFCQNPDTKVIDTRISDDGHSIRRRRECPNC. The 91-residue stretch at 46–136 folds into the ATP-cone domain; it reads LLVKKRSGNV…VYQNFEDLED (91 aa).

Belongs to the NrdR family. Requires Zn(2+) as cofactor.

Its function is as follows. Negatively regulates transcription of bacterial ribonucleotide reductase nrd genes and operons by binding to NrdR-boxes. The sequence is that of Transcriptional repressor NrdR from Bifidobacterium animalis subsp. lactis (strain AD011).